We begin with the raw amino-acid sequence, 200 residues long: MKVGVIAYQGSFEEHAIQLKRAMSKLNLTGEVIAVKKPKDVDLIDGVVIPGGESTTIGIIAEKLGVLDEIKAKINAGLPVLGTCAGAIMLAKDVSDAKVGKKSQPLIGTMDIQVVRNYYGRQRESFETDLDFRVIGGGKARVVFIRAPIIKRTWNDATALISFENGIVMAEQKNMLATTFHPELSESTIVHEYFLSKIKK.

52 to 54 (GES) lines the L-glutamine pocket. C84 serves as the catalytic Nucleophile. L-glutamine-binding positions include R116 and 145 to 146 (IR). Catalysis depends on charge relay system residues H181 and E183.

It belongs to the glutaminase PdxT/SNO family. As to quaternary structure, in the presence of PdxS, forms a dodecamer of heterodimers. Only shows activity in the heterodimer.

It carries out the reaction aldehydo-D-ribose 5-phosphate + D-glyceraldehyde 3-phosphate + L-glutamine = pyridoxal 5'-phosphate + L-glutamate + phosphate + 3 H2O + H(+). The catalysed reaction is L-glutamine + H2O = L-glutamate + NH4(+). The protein operates within cofactor biosynthesis; pyridoxal 5'-phosphate biosynthesis. Functionally, catalyzes the hydrolysis of glutamine to glutamate and ammonia as part of the biosynthesis of pyridoxal 5'-phosphate. The resulting ammonia molecule is channeled to the active site of PdxS. The polypeptide is Pyridoxal 5'-phosphate synthase subunit PdxT (Sulfolobus acidocaldarius (strain ATCC 33909 / DSM 639 / JCM 8929 / NBRC 15157 / NCIMB 11770)).